A 305-amino-acid chain; its full sequence is tRNA-cytidine(32) 2-sulfurtransferase (305 aa).

The interval Met1–Arg20 is disordered. Positions Ser59–Ser64 match the PP-loop motif motif. [4Fe-4S] cluster-binding residues include Cys134, Cys137, and Cys225. The segment at Asp282–Asp305 is disordered.

This sequence belongs to the TtcA family. In terms of assembly, homodimer. Mg(2+) serves as cofactor. Requires [4Fe-4S] cluster as cofactor.

The protein localises to the cytoplasm. The enzyme catalyses cytidine(32) in tRNA + S-sulfanyl-L-cysteinyl-[cysteine desulfurase] + AH2 + ATP = 2-thiocytidine(32) in tRNA + L-cysteinyl-[cysteine desulfurase] + A + AMP + diphosphate + H(+). It functions in the pathway tRNA modification. In terms of biological role, catalyzes the ATP-dependent 2-thiolation of cytidine in position 32 of tRNA, to form 2-thiocytidine (s(2)C32). The sulfur atoms are provided by the cysteine/cysteine desulfurase (IscS) system. The sequence is that of tRNA-cytidine(32) 2-sulfurtransferase from Xanthomonas axonopodis pv. citri (strain 306).